Consider the following 333-residue polypeptide: MLTLTRICTVSYEVRSTFLFISVLEFAVGFLTNAFIFLVNFWDVVKRQPLSNSDCVLLCLSISRLFLHGLLFLSAIQLTHFQKLSEPLNHSYHAIIMLWMIANQANLWLATCLSLLYCSKLIRSSHTFLICLASWVSRKICQMLLGIILCSCICTVLCVWCYFSRPHFTVTTVLFTNNNTRLNWQIKDLNLFYSFLFCYLWSVPPFLLFLVSSGMLTVSLGRHMRTMKVYTRDFRDPSLEAHIKALKSLVSFFCFFVISSCAAFISVPLLILWRDKIGVMVCVGIMAACPSGHAAILISGNAKLRRAVTTILLWAQSSLKVRADHKADSRTLC.

At 1–17 (MLTLTRICTVSYEVRST) the chain is on the extracellular side. A helical transmembrane segment spans residues 18-38 (FLFISVLEFAVGFLTNAFIFL). The Cytoplasmic segment spans residues 39–55 (VNFWDVVKRQPLSNSDC). Residues 56-76 (VLLCLSISRLFLHGLLFLSAI) form a helical membrane-spanning segment. At 77-94 (QLTHFQKLSEPLNHSYHA) the chain is on the extracellular side. The helical transmembrane segment at 95 to 115 (IIMLWMIANQANLWLATCLSL) threads the bilayer. At 116–142 (LYCSKLIRSSHTFLICLASWVSRKICQ) the chain is on the cytoplasmic side. Residues 143 to 163 (MLLGIILCSCICTVLCVWCYF) traverse the membrane as a helical segment. Topologically, residues 164–190 (SRPHFTVTTVLFTNNNTRLNWQIKDLN) are extracellular. A glycan (N-linked (GlcNAc...) asparagine) is linked at Asn178. Residues 191–211 (LFYSFLFCYLWSVPPFLLFLV) traverse the membrane as a helical segment. Over 212 to 251 (SSGMLTVSLGRHMRTMKVYTRDFRDPSLEAHIKALKSLVS) the chain is Cytoplasmic. A helical transmembrane segment spans residues 252–272 (FFCFFVISSCAAFISVPLLIL). At 273–276 (WRDK) the chain is on the extracellular side. A helical transmembrane segment spans residues 277-297 (IGVMVCVGIMAACPSGHAAIL). Over 298–333 (ISGNAKLRRAVTTILLWAQSSLKVRADHKADSRTLC) the chain is Cytoplasmic.

This sequence belongs to the G-protein coupled receptor T2R family.

Its subcellular location is the membrane. Receptor that may play a role in the perception of bitterness and is gustducin-linked. May play a role in sensing the chemical composition of the gastrointestinal content. The activity of this receptor may stimulate alpha gustducin, mediate PLC-beta-2 activation and lead to the gating of TRPM5. The sequence is that of Taste receptor type 2 member 38 (TAS2R38) from Hylobates klossii (Kloss's gibbon).